The primary structure comprises 211 residues: Bcl-2 homologous antagonist/killer (211 aa).

Residues 1–28 are disordered; it reads MASGQGPGPPRQECGEPALPSASEEQVA. Position 2 is an N-acetylalanine (Ala-2). The BH3 motif lies at 74–88; the sequence is VGRQLAIIGDDINRR. Residues 117–136 carry the BH1 motif; it reads SLFESGINWGRVVALLGFGY. Positions 160 and 164 each coordinate Zn(2+). Positions 169–184 match the BH2 motif; that stretch reads RWIAQRGGWVAALNLG. A helical transmembrane segment spans residues 188 to 205; the sequence is ILNVLVVLGVVLLGQFVV.

The protein belongs to the Bcl-2 family. As to quaternary structure, homodimer. Formation of the homodimer is zinc-dependent. Forms heterodimers with BCL2 and BCL2L1 isoform Bcl-X(L). Forms heterooligomers with BAX. Interacts with BCL2A1. Interacts with RTL10/BOP. Interacts with VDAC1. Interacts with GIMAP3/IAN4 and GIMAP5/IAN5. (Microbial infection) Interacts with vaccinia virus protein F1. In terms of assembly, (Microbial infection) Interacts with myxoma virus protein M11L. As to quaternary structure, (Microbial infection) Interacts with Epstein-Barr virus protein BALF1. (Microbial infection) Interacts with adenovirus protein E1B 19K. As to expression, expressed in a wide variety of tissues, with highest levels in the heart and skeletal muscle.

The protein resides in the mitochondrion outer membrane. Functionally, plays a role in the mitochondrial apoptotic process. Upon arrival of cell death signals, promotes mitochondrial outer membrane (MOM) permeabilization by oligomerizing to form pores within the MOM. This releases apoptogenic factors into the cytosol, including cytochrome c, promoting the activation of caspase 9 which in turn processes and activates the effector caspases. This chain is Bcl-2 homologous antagonist/killer (BAK1), found in Homo sapiens (Human).